Consider the following 192-residue polypeptide: MKIFGTMYDKTMEWSKHRFAVFWLSFVSFIEAIFFPIPPDVMLIPMSMSKPKSAVKFAFYTAIASVIGGIIGYAIGFYATDWVENIVQQWGYAAHWAKAVSWFEQWGVLVVFVAGFSPIPYKVFTLCAGVMQMAFFPFVITAFVSRLARFLLVAKLAAWGGEKFAAKLRKSIEIIGWSVVVLAVIAYFILKN.

This is an uncharacterized protein from Haemophilus influenzae (strain ATCC 51907 / DSM 11121 / KW20 / Rd).